The sequence spans 985 residues: Invasin (985 aa).

Residues 494–594 (SVTVQQPQLT…RQSVDTHFVK (101 aa)) form a D1 region. Topologically, residues 494 to 985 (SVTVQQPQLT…LAFPLCALAI (492 aa)) are extracellular. Big-1 domains lie at 503–594 (TLTA…HFVK) and 601–691 (KSTL…VNFT). The interval 595 to 694 (GTIAADKSTL…SVTVNFTADP (100 aa)) is D2. Residues 695–794 (IPDAGRSSFT…LQKKISLFPV (100 aa)) form a D3 region. The D4 stretch occupies residues 795–886 (PTLTGILVNG…YSVSYRFYPN (92 aa)). Residues 795-985 (PTLTGILVNG…LAFPLCALAI (191 aa)) form an integrin-binding region. The D5 stretch occupies residues 887–985 (RWIYDGGTSL…LAFPLCALAI (99 aa)). C906 and C981 are joined by a disulfide.

Belongs to the intimin/invasin family.

The protein resides in the cell surface. In terms of biological role, invasin is a protein that allows enteric bacteria to penetrate cultured mammalian cells. The entry of invasin in the cell is mediated by binding several beta-1 chain integrins. The polypeptide is Invasin (Yersinia pseudotuberculosis serotype I (strain IP32953)).